The sequence spans 316 residues: Ornithine carbamoyltransferase (316 aa).

Residues 57-60 (STRT), glutamine 84, arginine 108, and 135-138 (HPCQ) each bind carbamoyl phosphate. L-ornithine is bound by residues asparagine 166, aspartate 230, and 234–235 (SM). Carbamoyl phosphate is bound by residues 269 to 270 (CL) and arginine 297.

It belongs to the aspartate/ornithine carbamoyltransferase superfamily. OTCase family.

It is found in the cytoplasm. It carries out the reaction carbamoyl phosphate + L-ornithine = L-citrulline + phosphate + H(+). It participates in amino-acid biosynthesis; L-arginine biosynthesis; L-arginine from L-ornithine and carbamoyl phosphate: step 1/3. Its function is as follows. Reversibly catalyzes the transfer of the carbamoyl group from carbamoyl phosphate (CP) to the N(epsilon) atom of ornithine (ORN) to produce L-citrulline. The protein is Ornithine carbamoyltransferase of Bacillus thuringiensis subsp. konkukian (strain 97-27).